A 157-amino-acid polypeptide reads, in one-letter code: Transcription elongation factor GreA (157 aa).

The stretch at 12–74 (LKKLEEELEY…TLEAMLKNAK (63 aa)) forms a coiled coil.

The protein belongs to the GreA/GreB family.

Its function is as follows. Necessary for efficient RNA polymerase transcription elongation past template-encoded arresting sites. The arresting sites in DNA have the property of trapping a certain fraction of elongating RNA polymerases that pass through, resulting in locked ternary complexes. Cleavage of the nascent transcript by cleavage factors such as GreA or GreB allows the resumption of elongation from the new 3'terminus. GreA releases sequences of 2 to 3 nucleotides. In Thermoanaerobacter pseudethanolicus (strain ATCC 33223 / 39E) (Clostridium thermohydrosulfuricum), this protein is Transcription elongation factor GreA.